The following is a 366-amino-acid chain: Alanine racemase (366 aa).

The active-site Proton acceptor; specific for D-alanine is Lys40. Position 40 is an N6-(pyridoxal phosphate)lysine (Lys40). Arg136 contacts substrate. Tyr263 serves as the catalytic Proton acceptor; specific for L-alanine. Substrate is bound at residue Met310.

The protein belongs to the alanine racemase family. The cofactor is pyridoxal 5'-phosphate.

The catalysed reaction is L-alanine = D-alanine. Its pathway is amino-acid biosynthesis; D-alanine biosynthesis; D-alanine from L-alanine: step 1/1. In terms of biological role, catalyzes the interconversion of L-alanine and D-alanine. May also act on other amino acids. The sequence is that of Alanine racemase (alr) from Streptococcus equi subsp. zooepidemicus (strain H70).